We begin with the raw amino-acid sequence, 173 residues long: Phosphopantetheine adenylyltransferase (173 aa).

Substrate is bound at residue Thr9. ATP is bound by residues 9–10 (TF) and His17. Substrate-binding residues include Lys41, Thr75, and Arg89. Residues 90–92 (GLR), Glu100, and 125–131 (HIYLSSS) each bind ATP.

This sequence belongs to the bacterial CoaD family. As to quaternary structure, homohexamer. The cofactor is Mg(2+).

It localises to the cytoplasm. It catalyses the reaction (R)-4'-phosphopantetheine + ATP + H(+) = 3'-dephospho-CoA + diphosphate. It participates in cofactor biosynthesis; coenzyme A biosynthesis; CoA from (R)-pantothenate: step 4/5. Reversibly transfers an adenylyl group from ATP to 4'-phosphopantetheine, yielding dephospho-CoA (dPCoA) and pyrophosphate. The chain is Phosphopantetheine adenylyltransferase from Methylacidiphilum infernorum (isolate V4) (Methylokorus infernorum (strain V4)).